A 402-amino-acid polypeptide reads, in one-letter code: 4-hydroxy-3-methylbut-2-enyl diphosphate reductase (402 aa).

Cys66 lines the [4Fe-4S] cluster pocket. Residue His96 participates in (2E)-4-hydroxy-3-methylbut-2-enyl diphosphate binding. Residue His96 participates in dimethylallyl diphosphate binding. Position 96 (His96) interacts with isopentenyl diphosphate. Residue Cys157 participates in [4Fe-4S] cluster binding. Position 185 (His185) interacts with (2E)-4-hydroxy-3-methylbut-2-enyl diphosphate. His185 provides a ligand contact to dimethylallyl diphosphate. An isopentenyl diphosphate-binding site is contributed by His185. Glu187 (proton donor) is an active-site residue. Thr250 provides a ligand contact to (2E)-4-hydroxy-3-methylbut-2-enyl diphosphate. Cys288 is a binding site for [4Fe-4S] cluster. (2E)-4-hydroxy-3-methylbut-2-enyl diphosphate is bound by residues Ser317, Ser318, Asn319, and Ser379. Positions 317, 318, 319, and 379 each coordinate dimethylallyl diphosphate. Isopentenyl diphosphate contacts are provided by Ser317, Ser318, Asn319, and Ser379.

Belongs to the IspH family. [4Fe-4S] cluster is required as a cofactor.

It carries out the reaction isopentenyl diphosphate + 2 oxidized [2Fe-2S]-[ferredoxin] + H2O = (2E)-4-hydroxy-3-methylbut-2-enyl diphosphate + 2 reduced [2Fe-2S]-[ferredoxin] + 2 H(+). The enzyme catalyses dimethylallyl diphosphate + 2 oxidized [2Fe-2S]-[ferredoxin] + H2O = (2E)-4-hydroxy-3-methylbut-2-enyl diphosphate + 2 reduced [2Fe-2S]-[ferredoxin] + 2 H(+). It functions in the pathway isoprenoid biosynthesis; dimethylallyl diphosphate biosynthesis; dimethylallyl diphosphate from (2E)-4-hydroxy-3-methylbutenyl diphosphate: step 1/1. It participates in isoprenoid biosynthesis; isopentenyl diphosphate biosynthesis via DXP pathway; isopentenyl diphosphate from 1-deoxy-D-xylulose 5-phosphate: step 6/6. In terms of biological role, catalyzes the conversion of 1-hydroxy-2-methyl-2-(E)-butenyl 4-diphosphate (HMBPP) into a mixture of isopentenyl diphosphate (IPP) and dimethylallyl diphosphate (DMAPP). Acts in the terminal step of the DOXP/MEP pathway for isoprenoid precursor biosynthesis. The protein is 4-hydroxy-3-methylbut-2-enyl diphosphate reductase of Crocosphaera subtropica (strain ATCC 51142 / BH68) (Cyanothece sp. (strain ATCC 51142)).